The sequence spans 166 residues: HTH-type transcriptional regulator PecS (166 aa).

An HTH marR-type domain is found at 25–160; that stretch reads PMLVIGTLSR…LRALLGRVEK (136 aa).

It localises to the cytoplasm. With respect to regulation, the presence of PecM is required to ensure the full regulation of the pecS-pecM intergenic region by PecS. Negatively regulates the expression of genes encoding pectinase and cellulase, which play a major role in virulence, and the expression of the blue pigment indigoidine, which is implicated in pathogenicity and protection from oxidative stress. Represses the expression of genes involved in indigoidine biosynthesis by binding to indA and indC promoter regions. Also binds to promoter sites in the pecS-pecM intergenic region and negatively autoregulates its expression as well as that of pecM. The chain is HTH-type transcriptional regulator PecS from Dickeya dadantii (strain 3937) (Erwinia chrysanthemi (strain 3937)).